An 894-amino-acid polypeptide reads, in one-letter code: Glutamate receptor 3 (894 aa).

The first 28 residues, 1–28 (MARQKKMGQSVLRAVFFLVLGLLGHSHG), serve as a signal peptide directing secretion. Over 29–552 (GFPNTISIGG…GVFSFLDPLA (524 aa)) the chain is Extracellular. Asn-63, Asn-266, Asn-380, Asn-415, and Asn-422 each carry an N-linked (GlcNAc...) asparagine glycan. A disulfide bridge links Cys-91 with Cys-340. The L-glutamate site is built by Pro-508, Thr-510, and Arg-515. The chain crosses the membrane as a helical span at residues 553–573 (YEIWMCIVFAYIGVSVVLFLV). The Cytoplasmic portion of the chain corresponds to 574–602 (SRFSPYEWHLEDNNEEPRDPQSPPDPPNE). Positions 603–618 (FGIFNSLWFSLGAFMQ) form an intramembrane region, helical; Pore-forming. The stretch at 619–621 (QGC) is an intramembrane region. Residue Cys-621 is the site of S-palmitoyl cysteine attachment. Residues 622-627 (DISPRS) are Cytoplasmic-facing. Residues 628–648 (LSGRIVGGVWWFFTLIIISSY) traverse the membrane as a helical segment. At 649–823 (TANLAAFLTV…DKTSALSLSN (175 aa)) the chain is on the extracellular side. L-glutamate contacts are provided by Ser-686, Thr-687, and Glu-737. An intrachain disulfide couples Cys-750 to Cys-805. Residues 824–844 (VAGVFYILVGGLGLAMMVALI) form a helical membrane-spanning segment. Over 845-894 (EFCYKSRAESKRMKLTKNTQNFKPAPATNTQNYATYREGYNVYGTESVKI) the chain is Cytoplasmic. Cys-847 is lipidated: S-palmitoyl cysteine. Phosphotyrosine occurs at positions 877 and 887.

Belongs to the glutamate-gated ion channel (TC 1.A.10.1) family. GRIA3 subfamily. Homotetramer or heterotetramer of pore-forming glutamate receptor subunits. Tetramers may be formed by the dimerization of dimers. Interacts with PICK1, GRIP1 and GRIP2. Found in a complex with GRIA1, GRIA2, GRIA4, CNIH2, CNIH3, CACNG2, CACNG3, CACNG4, CACNG5, CACNG7 and CACNG8. Interacts with CACNG5. Found in a complex with GRIA1, GRIA2, GRIA4, DLG4, CACNG8 and CNIH2.

It is found in the cell membrane. It localises to the postsynaptic cell membrane. The protein resides in the postsynaptic density membrane. The catalysed reaction is Ca(2+)(in) = Ca(2+)(out). Its function is as follows. Ionotropic glutamate receptor that functions as a ligand-gated cation channel, gated by L-glutamate and glutamatergic agonists such as alpha-amino-3-hydroxy-5-methyl-4-isoxazolepropionic acid (AMPA), quisqualic acid, and kainic acid. L-glutamate acts as an excitatory neurotransmitter at many synapses in the central nervous system and plays an important role in fast excitatory synaptic transmission by inducing long-term potentiation. Binding of the excitatory neurotransmitter L-glutamate induces a conformation change, leading to the opening of the cation channel, and thereby converts the chemical signal to an electrical impulse upon entry of calcium. The receptor then desensitizes rapidly and enters a transient inactive state, characterized by the presence of bound agonist. In the presence of CACNG8, shows resensitization which is characterized by a delayed accumulation of current flux upon continued application of glutamate. The polypeptide is Glutamate receptor 3 (Homo sapiens (Human)).